A 503-amino-acid polypeptide reads, in one-letter code: ATP synthase subunit alpha (503 aa).

170–177 (GDRQTGKT) is a binding site for ATP.

Belongs to the ATPase alpha/beta chains family. F-type ATPases have 2 components, CF(1) - the catalytic core - and CF(0) - the membrane proton channel. CF(1) has five subunits: alpha(3), beta(3), gamma(1), delta(1), epsilon(1). CF(0) has three main subunits: a(1), b(2) and c(9-12). The alpha and beta chains form an alternating ring which encloses part of the gamma chain. CF(1) is attached to CF(0) by a central stalk formed by the gamma and epsilon chains, while a peripheral stalk is formed by the delta and b chains.

It is found in the cell inner membrane. It carries out the reaction ATP + H2O + 4 H(+)(in) = ADP + phosphate + 5 H(+)(out). In terms of biological role, produces ATP from ADP in the presence of a proton gradient across the membrane. The alpha chain is a regulatory subunit. This Geobacter metallireducens (strain ATCC 53774 / DSM 7210 / GS-15) protein is ATP synthase subunit alpha.